Here is a 526-residue protein sequence, read N- to C-terminus: Peptide chain release factor 3 (526 aa).

Residues 11–277 (SKRRTFAIIS…SLIKWAPSPL (267 aa)) enclose the tr-type G domain. GTP-binding positions include 20 to 27 (SHPDAGKT), 88 to 92 (DTPGH), and 142 to 145 (NKLD).

This sequence belongs to the TRAFAC class translation factor GTPase superfamily. Classic translation factor GTPase family. PrfC subfamily.

The protein resides in the cytoplasm. Functionally, increases the formation of ribosomal termination complexes and stimulates activities of RF-1 and RF-2. It binds guanine nucleotides and has strong preference for UGA stop codons. It may interact directly with the ribosome. The stimulation of RF-1 and RF-2 is significantly reduced by GTP and GDP, but not by GMP. This Buchnera aphidicola subsp. Acyrthosiphon pisum (strain Tuc7) protein is Peptide chain release factor 3.